A 346-amino-acid chain; its full sequence is Sensor protein kinase GraS (346 aa).

2 helical membrane-spanning segments follow: residues 15 to 35 (MNWI…SLID) and 43 to 63 (LFYI…LTYF). The Histidine kinase domain maps to 126–332 (EFVHDIKTPV…TVRLIFPLQN (207 aa)).

As to quaternary structure, interacts with GraX.

The protein resides in the cell membrane. It carries out the reaction ATP + protein L-histidine = ADP + protein N-phospho-L-histidine.. Its function is as follows. Member of the two-component regulatory system GraR/GraS involved in resistance against cationic antimicrobial peptides (CAMPs). Functions as a sensor protein kinase which phosphorylates GraR through the auxiliary protein GraX. In turn, GraR up-regulates many genes such as adhesins, exoproteins, transporters, toxins, and proteins involved in cell wall synthesis. Down-regulates the expression of many genes involved in RNA and amino acid synthesis or glycolysis. The protein is Sensor protein kinase GraS (graS) of Staphylococcus aureus (strain bovine RF122 / ET3-1).